Consider the following 143-residue polypeptide: Ribosome maturation factor RimP (143 aa).

This sequence belongs to the RimP family.

Its subcellular location is the cytoplasm. Required for maturation of 30S ribosomal subunits. This Neisseria meningitidis serogroup C (strain 053442) protein is Ribosome maturation factor RimP.